The following is a 306-amino-acid chain: Methionyl-tRNA formyltransferase (306 aa).

110-113 (SLLP) serves as a coordination point for (6S)-5,6,7,8-tetrahydrofolate.

This sequence belongs to the Fmt family.

It catalyses the reaction L-methionyl-tRNA(fMet) + (6R)-10-formyltetrahydrofolate = N-formyl-L-methionyl-tRNA(fMet) + (6S)-5,6,7,8-tetrahydrofolate + H(+). Attaches a formyl group to the free amino group of methionyl-tRNA(fMet). The formyl group appears to play a dual role in the initiator identity of N-formylmethionyl-tRNA by promoting its recognition by IF2 and preventing the misappropriation of this tRNA by the elongation apparatus. This Brucella suis biovar 1 (strain 1330) protein is Methionyl-tRNA formyltransferase.